A 509-amino-acid chain; its full sequence is Lanosterol 14-alpha demethylase (509 aa).

A helical transmembrane segment spans residues 30 to 50; it reads GNLLSMLLIACAFTLSLVYLI. Residue Cys455 coordinates heme.

Belongs to the cytochrome P450 family. The cofactor is heme. Post-translationally, ubiquitinated by MARCHF6, leading to proteasomal degradation. Ubiquitously expressed with highest levels in testis, ovary, adrenal, prostate, liver, kidney and lung.

The protein resides in the endoplasmic reticulum membrane. It localises to the microsome membrane. The catalysed reaction is a 14alpha-methyl steroid + 3 reduced [NADPH--hemoprotein reductase] + 3 O2 = a Delta(14) steroid + formate + 3 oxidized [NADPH--hemoprotein reductase] + 4 H2O + 4 H(+). It catalyses the reaction lanosterol + 3 reduced [NADPH--hemoprotein reductase] + 3 O2 = 4,4-dimethyl-5alpha-cholesta-8,14,24-trien-3beta-ol + formate + 3 oxidized [NADPH--hemoprotein reductase] + 4 H2O + 4 H(+). It carries out the reaction 24,25-dihydrolanosterol + 3 reduced [NADPH--hemoprotein reductase] + 3 O2 = 4,4-dimethyl-8,14-cholestadien-3beta-ol + formate + 3 oxidized [NADPH--hemoprotein reductase] + 4 H2O + 4 H(+). The enzyme catalyses a 14alpha-methyl steroid + reduced [NADPH--hemoprotein reductase] + O2 = a 14alpha-hydroxymethyl steroid + oxidized [NADPH--hemoprotein reductase] + H2O + H(+). The catalysed reaction is a 14alpha-hydroxymethyl steroid + reduced [NADPH--hemoprotein reductase] + O2 = a 14alpha-formyl steroid + oxidized [NADPH--hemoprotein reductase] + 2 H2O + H(+). It catalyses the reaction a 14alpha-formyl steroid + reduced [NADPH--hemoprotein reductase] + O2 = a Delta(14) steroid + formate + oxidized [NADPH--hemoprotein reductase] + H2O + 2 H(+). It carries out the reaction lanosterol + reduced [NADPH--hemoprotein reductase] + O2 = 32-hydroxylanosterol + oxidized [NADPH--hemoprotein reductase] + H2O + H(+). The enzyme catalyses 32-hydroxylanosterol + reduced [NADPH--hemoprotein reductase] + O2 = 32-oxolanosterol + oxidized [NADPH--hemoprotein reductase] + 2 H2O + H(+). The catalysed reaction is 32-oxolanosterol + reduced [NADPH--hemoprotein reductase] + O2 = 4,4-dimethyl-5alpha-cholesta-8,14,24-trien-3beta-ol + formate + oxidized [NADPH--hemoprotein reductase] + H2O + 2 H(+). It catalyses the reaction 24,25-dihydrolanosterol + reduced [NADPH--hemoprotein reductase] + O2 = 32-hydroxy-24,25-dihydrolanosterol + oxidized [NADPH--hemoprotein reductase] + H2O + H(+). It carries out the reaction 32-hydroxy-24,25-dihydrolanosterol + reduced [NADPH--hemoprotein reductase] + O2 = 32-oxo-24,25-dihydrolanosterol + oxidized [NADPH--hemoprotein reductase] + 2 H2O + H(+). The enzyme catalyses 32-oxo-24,25-dihydrolanosterol + reduced [NADPH--hemoprotein reductase] + O2 = 4,4-dimethyl-8,14-cholestadien-3beta-ol + formate + oxidized [NADPH--hemoprotein reductase] + H2O + 2 H(+). It participates in steroid biosynthesis; zymosterol biosynthesis; zymosterol from lanosterol: step 1/6. With respect to regulation, inhibited by azalanstat. Inhibited by azole antifungal agents ketoconazole, itraconazole and fluconazole. Its function is as follows. Sterol 14alpha-demethylase that plays a critical role in the cholesterol biosynthesis pathway, being cholesterol the major sterol component in mammalian membranes as well as a precursor for bile acid and steroid hormone synthesis. Cytochrome P450 monooxygenase that catalyzes the three-step oxidative removal of the 14alpha-methyl group (C-32) of sterols such as lanosterol (lanosta-8,24-dien-3beta-ol) and 24,25-dihydrolanosterol (DHL) in the form of formate, and converts the sterols to 4,4-dimethyl-5alpha-cholesta-8,14,24-trien-3beta-ol and 4,4-dimethyl-8,14-cholestadien-3beta-ol, respectively, which are intermediates of cholesterol biosynthesis. Can also demethylate substrates not intrinsic to mammals, such as eburicol (24-methylene-24,25-dihydrolanosterol), but at a lower rate than DHL. The chain is Lanosterol 14-alpha demethylase from Homo sapiens (Human).